The sequence spans 264 residues: Phosphatidylglycerol--prolipoprotein diacylglyceryl transferase (264 aa).

Transmembrane regions (helical) follow at residues 14 to 34, 60 to 80, 98 to 118, 128 to 148, 176 to 196, 203 to 223, and 240 to 260; these read IIFS…LIGF, LIYT…VFFY, GGMS…WVSF, ADFI…GNFI, SQLY…NWFI, GSVA…VEYV, and GQLL…WAYS. Arg-143 is a binding site for a 1,2-diacyl-sn-glycero-3-phospho-(1'-sn-glycerol).

It belongs to the Lgt family.

It is found in the cell inner membrane. The enzyme catalyses L-cysteinyl-[prolipoprotein] + a 1,2-diacyl-sn-glycero-3-phospho-(1'-sn-glycerol) = an S-1,2-diacyl-sn-glyceryl-L-cysteinyl-[prolipoprotein] + sn-glycerol 1-phosphate + H(+). It functions in the pathway protein modification; lipoprotein biosynthesis (diacylglyceryl transfer). In terms of biological role, catalyzes the transfer of the diacylglyceryl group from phosphatidylglycerol to the sulfhydryl group of the N-terminal cysteine of a prolipoprotein, the first step in the formation of mature lipoproteins. In Actinobacillus pleuropneumoniae serotype 7 (strain AP76), this protein is Phosphatidylglycerol--prolipoprotein diacylglyceryl transferase.